Here is a 2769-residue protein sequence, read N- to C-terminus: Teneurin-4 (2769 aa).

Basic and acidic residues predominate over residues 1–22 (MDVKERKPYRSLTRRRDAERRY). Residues 1–45 (MDVKERKPYRSLTRRRDAERRYTSSSADSEEGKAPQKSYSSSETL) are disordered. Residues 1-341 (MDVKERKPYR…KPSKYCNWKC (341 aa)) enclose the Teneurin N-terminal domain. The Cytoplasmic portion of the chain corresponds to 1–345 (MDVKERKPYR…YCNWKCAALS (345 aa)). Phosphoserine is present on serine 124. The segment at 130–233 (RLWGRSTRSG…PPAGGAQEPA (104 aa)) is disordered. Positions 134-155 (RSTRSGRSSCLSSRANSNLTLT) are enriched in low complexity. Positions 156 to 166 (DTEHENTETDH) are enriched in basic and acidic residues. Residue threonine 178 is modified to Phosphothreonine. Positions 187 to 211 (HTPNQHHAASINSLNRGNFTPRSNP) are enriched in polar residues. A helical membrane pass occupies residues 346-366 (AIVISATLVILLAYFVAMHLF). Topologically, residues 367-2769 (GLNWHLQPME…FMRQSEMGRR (2403 aa)) are extracellular. The tract at residues 400–426 (PSGGTGLETPDRKGKGTTEGKPSSFFP) is disordered. Over residues 408–417 (TPDRKGKGTT) the composition is skewed to basic and acidic residues. Asparagine 467 is a glycosylation site (N-linked (GlcNAc...) asparagine). A disordered region spans residues 507–526 (ARSLEGTPRQSRGTVPPSSH). Residues 514 to 526 (PRQSRGTVPPSSH) are compositionally biased toward polar residues. 8 EGF-like domains span residues 562-593 (SVDN…PDCG), 594-624 (RASC…AECD), 626-658 (PTNQ…ESCE), 659-690 (EVDC…TNCE), 692-725 (PRAT…HDCS), 726-757 (IEIC…ACDQ), 758-787 (RACH…EHCT), and 788-831 (IAHY…AGCD). Disulfide bonds link cysteine 566–cysteine 576, cysteine 570–cysteine 581, cysteine 583–cysteine 592, cysteine 601–cysteine 612, cysteine 614–cysteine 623, cysteine 630–cysteine 641, cysteine 635–cysteine 646, cysteine 648–cysteine 657, cysteine 662–cysteine 673, cysteine 667–cysteine 678, cysteine 680–cysteine 689, cysteine 700–cysteine 713, cysteine 715–cysteine 724, cysteine 729–cysteine 739, cysteine 733–cysteine 744, cysteine 746–cysteine 755, cysteine 760–cysteine 770, cysteine 764–cysteine 775, cysteine 777–cysteine 786, cysteine 800–cysteine 810, cysteine 804–cysteine 819, and cysteine 821–cysteine 830. Asparagine 940 and asparagine 1259 each carry an N-linked (GlcNAc...) asparagine glycan. NHL repeat units follow at residues 1216–1259 (SCPS…PSGN), 1264–1308 (LELR…IKST), 1334–1378 (TRCG…NGII), 1393–1444 (LSCD…VAGR), and 1523–1566 (CFSG…IRKN). The stretch at 1576-1595 (YELSSPIDQELYLFDTTGKH) is one YD 1 repeat. A glycan (N-linked (GlcNAc...) asparagine) is linked at asparagine 1609. YD repeat units lie at residues 1612–1632 (YTGD…VNVR), 1675–1694 (YHGN…WTTF), and 1695–1717 (YEYD…SSFR). Asparagine 1705, asparagine 1741, asparagine 1799, and asparagine 1884 each carry an N-linked (GlcNAc...) asparagine glycan. YD repeat units lie at residues 1887–1906 (YSPG…ERME), 1928–1946 (YLEK…YIFE), 1947–1967 (FDKN…QTLE), 1974–1991 (YYRN…VIQD), 1992–2013 (FTED…VIYK), 2014–2031 (YGKL…TKVS), 2034–2054 (YDET…FTCT), 2057–2077 (YRQI…EGMV), 2085–2104 (YDNS…TPLP), 2110–2127 (YDDV…GVIY), 2128–2154 (YDIN…MKEV), 2156–2169 (YEIF…MTVQ), 2170–2193 (YDNM…TRYS), 2196–2216 (YDAD…WRYS), 2217–2237 (YDLN…LTPL), 2239–2259 (YDIR…DEDG), 2271–2291 (YNSA…SVRY), and 2293–2313 (YDGL…LQFF). Asparagine 1985 carries an N-linked (GlcNAc...) asparagine glycan. Residue asparagine 2188 is glycosylated (N-linked (GlcNAc...) asparagine). Asparagine 2328 carries an N-linked (GlcNAc...) asparagine glycan. The YD 23 repeat unit spans residues 2339 to 2380 (YDLQGHLFAMELSSGDEFYIACDNIGTPLAVFSGTGLMIKQI). N-linked (GlcNAc...) asparagine glycosylation occurs at asparagine 2646.

It belongs to the tenascin family. Teneurin subfamily. In terms of assembly, homodimer; disulfide-linked. May also form heterodimer with either TENM1 or TENM2 or TENM3.

It is found in the cell membrane. Its subcellular location is the cell projection. It localises to the nucleus. The protein localises to the cytoplasm. Its function is as follows. Involved in neural development, regulating the establishment of proper connectivity within the nervous system. Plays a role in the establishment of the anterior-posterior axis during gastrulation. Regulates the differentiation and cellular process formation of oligodendrocytes and myelination of small-diameter axons in the central nervous system (CNS). Promotes activation of focal adhesion kinase. May function as a cellular signal transducer. This Homo sapiens (Human) protein is Teneurin-4 (TENM4).